The primary structure comprises 243 residues: tRNA pseudouridine synthase A (243 aa).

The Nucleophile role is filled by D53. Y111 is a binding site for substrate.

The protein belongs to the tRNA pseudouridine synthase TruA family. Homodimer.

It carries out the reaction uridine(38/39/40) in tRNA = pseudouridine(38/39/40) in tRNA. In terms of biological role, formation of pseudouridine at positions 38, 39 and 40 in the anticodon stem and loop of transfer RNAs. The polypeptide is tRNA pseudouridine synthase A (Chlorobium phaeovibrioides (strain DSM 265 / 1930) (Prosthecochloris vibrioformis (strain DSM 265))).